The primary structure comprises 437 residues: Elongation factor 1-gamma (437 aa).

Position 2 is an N-acetylalanine (alanine 2). The GST N-terminal domain occupies 2–87; it reads AAGTLYTYPE…YVSNEELRGS (86 aa). In terms of domain architecture, GST C-terminal spans 88–216; that stretch reads TPEAAAQVVQ…VKLCEKMAQF (129 aa). N6-acetyllysine occurs at positions 147 and 212. Positions 221–254 are enriched in basic and acidic residues; that stretch reads FAESQPKKDTPRKEKGSREEKQKPQAERKEEKKA. The segment at 221–268 is disordered; sequence FAESQPKKDTPRKEKGSREEKQKPQAERKEEKKAAAPAPEEEMDECEQ. Lysine 253 is covalently cross-linked (Glycyl lysine isopeptide (Lys-Gly) (interchain with G-Cter in SUMO1)). Residues 276-437 enclose the EF-1-gamma C-terminal domain; sequence AKDPFAHLPK…KAFNQGKIFK (162 aa). Lysine 285 is covalently cross-linked (Glycyl lysine isopeptide (Lys-Gly) (interchain with G-Cter in SUMO2)). At lysine 401 the chain carries N6-acetyllysine. Lysine 434 is modified (N6-acetyllysine; alternate). Lysine 434 is subject to N6-malonyllysine; alternate.

In terms of assembly, EF-1 is composed of four subunits: alpha, beta, delta, and gamma.

In terms of biological role, probably plays a role in anchoring the complex to other cellular components. The polypeptide is Elongation factor 1-gamma (EEF1G) (Equus caballus (Horse)).